The following is a 63-amino-acid chain: Sperm protamine P1 (63 aa).

The tract at residues 1 to 63 (MARYRRHSRS…RYSRRGRRRY (63 aa)) is disordered.

This sequence belongs to the protamine P1 family. As to expression, testis.

The protein resides in the nucleus. It is found in the chromosome. Functionally, protamines substitute for histones in the chromatin of sperm during the haploid phase of spermatogenesis. They compact sperm DNA into a highly condensed, stable and inactive complex. The chain is Sperm protamine P1 (PRM1) from Phascogale tapoatafa (Common wambenger).